The sequence spans 251 residues: MAKEVDPCDHGEVVDAGCVRAVLAELVLTFVFVFTGVAATMAAGVPEVAGAAMPMAALAGVAIATALAAGVLVTAGFHVSGGHLNPAVTVALLARGHITAFRSALYVAAQLLASSLACILLRYLTGGMATPVHTLGSGIGPMQGLVMEIILTFSLLFVVYATILDPRSSVPGFGPLLTGLIVGANTIAGGNFSGASMNPARSFGPALATGVWTHHWIYWLGPLIGGPLAGLVYESLFLVKRTHEPLLDNSF.

A run of 2 helical transmembrane segments spans residues 26–46 (LVLTFVFVFTGVAATMAAGVP) and 57–77 (ALAGVAIATALAAGVLVTAGF). Residues 85 to 87 (NPA) carry the NPA 1 motif. The next 3 helical transmembrane spans lie at 104 to 124 (ALYVAAQLLASSLACILLRYL), 144 to 164 (GLVMEIILTFSLLFVVYATIL), and 170 to 190 (VPGFGPLLTGLIVGANTIAGG). An NPA 2 motif is present at residues 198–200 (NPA). The chain crosses the membrane as a helical span at residues 219-239 (WLGPLIGGPLAGLVYESLFLV).

The protein belongs to the MIP/aquaporin (TC 1.A.8) family. TIP (TC 1.A.8.10) subfamily. As to expression, expressed in roots, leaves and anthers.

It localises to the vacuole membrane. Aquaporins facilitate the transport of water and small neutral solutes across cell membranes. May be involved in transport from the vacuolar compartment to the cytoplasm. This Oryza sativa subsp. japonica (Rice) protein is Probable aquaporin TIP4-1 (TIP4-1).